Consider the following 359-residue polypeptide: Probable mannitol dehydrogenase (359 aa).

7 residues coordinate Zn(2+): Cys-48, His-70, Cys-101, Cys-104, Cys-107, Cys-115, and Cys-164.

This sequence belongs to the zinc-containing alcohol dehydrogenase family. Zn(2+) is required as a cofactor.

It catalyses the reaction D-mannitol + NAD(+) = D-mannose + NADH + H(+). In terms of biological role, oxidizes mannitol to mannose. Provides the initial step by which translocated mannitol is committed to central metabolism and, by regulating mannitol pool size, is important in regulating salt tolerance at the cellular level. The protein is Probable mannitol dehydrogenase (CAD) of Fragaria ananassa (Strawberry).